The sequence spans 1021 residues: PDZ domain-containing protein 7 (1021 aa).

PDZ domains follow at residues 86–156 (AVRV…LTSS) and 210–279 (IVHL…EVLK). The span at 324–344 (SSSSVSSYASSAPCSSGSLPS) shows a compositional bias: low complexity. Disordered stretches follow at residues 324 to 345 (SSSS…LPSD), 431 to 495 (ITRS…DSRS), and 724 to 814 (RRGA…HRPR). The span at 729-744 (APPPQPPPVAPRPPRP) shows a compositional bias: pro residues. Residues 758–767 (QQNQSQTPAQ) are compositionally biased toward polar residues. Basic residues predominate over residues 772–794 (SRSRSRSRSHSRGQGKSPGRRRS). The span at 799-808 (PIATAATANG) shows a compositional bias: low complexity. Residues 858–930 (TITLSKMKQS…QRAVDTIRRA (73 aa)) enclose the PDZ 3 domain. Positions 992-1021 (QLQQSLSSALKVPQSIPKLSPILKDPHDPS) are disordered.

As to quaternary structure, homodimerizes (via PDZ2 domain). Component of USH2 complex, composed of ADGRV1, PDZD7, USH2A and WHRN. Interacts (via PDZ domains) with WHRN; the interaction is direct. Interacts with USH1G. Interacts with ADGRV1 (via the cytoplasmic region). Interacts with USH2A (via the cytoplasmic region). Interacts with MYO7A (via MyTH4-FERM domains). As to expression, isoform 1 is expressed in developing and adult cochlea but not retina. Isoform 2 is expressed in developing and adult cochlea and retina. Isoform 3 is expressed in adult cochlea and retina. Isoform 4 is expressed in retina and developing cochlea but not adult cochlea. Isoform 5 is expressed in adult cochlea but not in developing cochlea or retina.

Its subcellular location is the cell projection. The protein resides in the cilium. It localises to the nucleus. The protein localises to the stereocilium. In cochlear developing hair cells, essential in organizing the USH2 complex at stereocilia ankle links. Blocks inhibition of adenylate cyclase activity mediated by ADGRV1. This chain is PDZ domain-containing protein 7, found in Mus musculus (Mouse).